Here is a 448-residue protein sequence, read N- to C-terminus: Methylenetetrahydrofolate--tRNA-(uracil-5-)-methyltransferase TrmFO (448 aa).

An FAD-binding site is contributed by 13–18 (GAGLAG).

The protein belongs to the MnmG family. TrmFO subfamily. FAD is required as a cofactor.

The protein resides in the cytoplasm. The catalysed reaction is uridine(54) in tRNA + (6R)-5,10-methylene-5,6,7,8-tetrahydrofolate + NADH + H(+) = 5-methyluridine(54) in tRNA + (6S)-5,6,7,8-tetrahydrofolate + NAD(+). The enzyme catalyses uridine(54) in tRNA + (6R)-5,10-methylene-5,6,7,8-tetrahydrofolate + NADPH + H(+) = 5-methyluridine(54) in tRNA + (6S)-5,6,7,8-tetrahydrofolate + NADP(+). In terms of biological role, catalyzes the folate-dependent formation of 5-methyl-uridine at position 54 (M-5-U54) in all tRNAs. The protein is Methylenetetrahydrofolate--tRNA-(uracil-5-)-methyltransferase TrmFO of Streptococcus pyogenes serotype M6 (strain ATCC BAA-946 / MGAS10394).